The following is a 1752-amino-acid chain: MSGIQFSPSSVPLRRVEEVQFGILSPEEIRSMSVAKIEFPETMDESGQRPRVGGLLDPRLGTIDRQFKCQTCGETMADCPGHFGHIELAKPVFHIGFLSKIKKILECVCWNCGKLKIDSSNPKFNDTQRYRDPKNRLNAVWNVCKTKMVCDTGLSAGSDNFDLSNPSANMGHGGCGAAQPTIRKDGLRLWGSWKRGKDESDLPEKRLLSPLEVHTIFTHISSEDLAHLGLNEQYARPDWMIITVLPVPPPSVRPSISVDGTSRGEDDLTHKLSDIIKANANVRRCEQEGAPAHIVSEYEQLLQFHVATYMDNEIAGQPQALQKSGRPLKSIRARLKGKEGRLRGNLMGKRVDFSARTVITGDPNLSLDELGVPRSIAKTLTYPETVTPYNIYQLQELVRNGPDEHPGAKYIIRDTGERIDLRYHKRAGDIPLRYGWRVERHIRDGDVVIFNRQPSLHKMSMMGHRIRVMPYSTFRLNLSVTSPYNADFDGDEMNMHVPQSEETRAEIQEITMVPKQIVSPQSNKPVMGIVQDTLAGVRKFSLRDNFLTRNAVMNIMLWVPDWDGILPPPVILKPKVLWTGKQILSLIIPKGINLIRDDDKQSLSNPTDSGMLIENGEIIYGVVDKKTVGASQGGLVHTIWKEKGPEICKGFFNGIQRVVNYWLLHNGFSIGIGDTIADADTMKEVTRTVKEARRQVAECIQDAQHNRLKPEPGMTLRESFEAKVSRILNQARDNAGRSAEHSLKDSNNVKQMVAAGSKGSFINISQMSACVGQQIVEGKRIPFGFKYRTLPHFPKDDDSPESRGFIENSYLRGLTPQEFFFHAMAGREGLIDTAVKTAETGYIQRRLVKAMEDVMVRYDGTVRNAMGDIIQFAYGEDGLDATLVEYQVFDSLRLSTKQFEKKYRIDLMEDRSLSLYMENSIENDSSVQDLLDEEYTQLVADRELLCKFIFPKGDARWPLPVNVQRIIQNALQIFHLEAKKPTDLLPSDIINGLNELIAKLTIFRGSDRITRDVQNNATLLFQILLRSKFAVKRVIMEYRLNKVAFEWIMGEVEARFQQAVVSPGEMVGTLAAQSIGEPATQMTLNTFHYAGVSSKNVTLGVPRLKEILNVAKNIKTPSLTIYLMPWIAANMDLAKNVQTQIEHTTLSTVTSATEIHYDPDPQDTVIEEDKDFVEAFFAIPDEEVEENLYKQSPWLLRLELDRAKMLDKKLSMSDVAGKIAESFERDLFTIWSEDNADKLIIRCRIIRDDDRKAEDDDNMIEEDVFLKTIEGHMLESISLRGVPNITRVYMMEHKIVRQIEDGTFERADEWVLETDGINLTEAMTVEGVDATRTYSNSFVEILQILGIEATRSALLKELRNVIEFDGSYVNYRHLALLCDVMTSRGHLMAITRHGINRAETGALMRCSFEETVEILMDAAASGEKDDCKGISENIMLGQLAPMGTGAFDIYLDQDMLMNYSLGTAVPTLAGSGMGTSQLPEGAGTPYERSPMVDSGFVGSPDAAAFSPLVQGGSEGREGFGDYGLLGAASPYKGVQSPGYTSPFSSAMSPGYGLTSPSYSPSSPGYSTSPAYMPSSPSYSPTSPSYSPTSPSYSPTSPSYSPTSPSYSATSPSYSPTSPSYSPTSPSYSPTSPSYSPTSPSYSPTSPSYSPTSPSYSPTSPSYSPTSPSYSPTSPSYSPTSPSYSPTSPSYSPTSPSYSPTSPSYSPTSPSYSPTSPSYSPTSPSYSPTSPSYSPTSPSYSPTSPSYSPTSPS.

Positions 69, 72, 79, 82, 109, 112, 150, and 175 each coordinate Zn(2+). The Mg(2+) site is built by Asp487, Asp489, and Asp491. The tract at residues 816-828 (PQEFFFHAMAGRE) is bridging helix. Lys1252 participates in a covalent cross-link: Glycyl lysine isopeptide (Lys-Gly) (interchain with G-Cter in ubiquitin). Phosphoserine is present on residues Ser1489, Ser1499, Ser1506, and Ser1529. Residue Tyr1531 is modified to Phosphotyrosine. The tract at residues 1554-1752 (TSPSYSPSSP…SPSYSPTSPS (199 aa)) is disordered. Repeat copies occupy residues 1558–1564 (YSPSSPG), 1578–1584 (YSPTSPS), 1585–1591 (YSPTSPS), 1592–1598 (YSPTSPS), and 1599–1605 (YSPTSPS). The segment at 1558-1752 (YSPSSPGYST…SPSYSPTSPS (195 aa)) is C-terminal domain (CTD); 26 X 7 AA approximate tandem repeats of Y-S-P-[TS]-S-P-S. The 6; approximate repeat unit spans residues 1606-1612 (YSATSPS). Repeat copies occupy residues 1613–1619 (YSPTSPS), 1620–1626 (YSPTSPS), 1627–1633 (YSPTSPS), 1634–1640 (YSPTSPS), 1641–1647 (YSPTSPS), 1648–1654 (YSPTSPS), 1655–1661 (YSPTSPS), 1662–1668 (YSPTSPS), 1669–1675 (YSPTSPS), 1676–1682 (YSPTSPS), 1683–1689 (YSPTSPS), 1690–1696 (YSPTSPS), 1697–1703 (YSPTSPS), 1704–1710 (YSPTSPS), 1711–1717 (YSPTSPS), 1718–1724 (YSPTSPS), 1725–1731 (YSPTSPS), 1732–1738 (YSPTSPS), 1739–1745 (YSPTSPS), and 1746–1752 (YSPTSPS).

It belongs to the RNA polymerase beta' chain family. In terms of assembly, component of the RNA polymerase II (Pol II) complex consisting of 12 subunits. Post-translationally, the tandem 7 residues repeats in the C-terminal domain (CTD) can be highly phosphorylated. The phosphorylation activates Pol II. Phosphorylation occurs mainly at residues 'Ser-2' and 'Ser-5' of the heptapeptide repeat. The phosphorylation state is believed to result from the balanced action of site-specific CTD kinases and phosphatase, and a 'CTD code' that specifies the position of Pol II within the transcription cycle has been proposed. In terms of processing, following transcription stress, the elongating form of RNA polymerase II (RNA pol IIo) is polyubiquitinated via 'Lys-63'-linkages on Lys-1252 at DNA damage sites without leading to degradation: ubiquitination promotes RNA pol IIo backtracking to allow access by the transcription-coupled nucleotide excision repair (TC-NER) machinery. Subsequent def1-dependent polyubiquitination by the elongin complex via 'Lys-48'-linkages may lead to proteasome-mediated degradation; presumably at stalled RNA pol II where TC-NER has failed, to halt global transcription and enable 'last resort' DNA repair pathways.

It is found in the nucleus. It catalyses the reaction RNA(n) + a ribonucleoside 5'-triphosphate = RNA(n+1) + diphosphate. DNA-dependent RNA polymerase catalyzes the transcription of DNA into RNA using the four ribonucleoside triphosphates as substrates. Largest and catalytic component of RNA polymerase II which synthesizes mRNA precursors and many functional non-coding RNAs. Forms the polymerase active center together with the second largest subunit. Pol II is the central component of the basal RNA polymerase II transcription machinery. It is composed of mobile elements that move relative to each other. RPB1 is part of the core element with the central large cleft, the clamp element that moves to open and close the cleft and the jaws that are thought to grab the incoming DNA template. At the start of transcription, a single-stranded DNA template strand of the promoter is positioned within the central active site cleft of Pol II. A bridging helix emanates from RPB1 and crosses the cleft near the catalytic site and is thought to promote translocation of Pol II by acting as a ratchet that moves the RNA-DNA hybrid through the active site by switching from straight to bent conformations at each step of nucleotide addition. During transcription elongation, Pol II moves on the template as the transcript elongates. Elongation is influenced by the phosphorylation status of the C-terminal domain (CTD) of Pol II largest subunit (RPB1), which serves as a platform for assembly of factors that regulate transcription initiation, elongation, termination and mRNA processing. The protein is DNA-directed RNA polymerase II subunit rpb1 (rpb1) of Schizosaccharomyces pombe (strain 972 / ATCC 24843) (Fission yeast).